The chain runs to 1030 residues: Subtilin biosynthesis protein SpaB (1030 aa).

The protein to S.epidermidis EpiB and L.lactis NisB.

The protein resides in the cell membrane. In terms of biological role, involved in the post-translational modification of the lantibiotic subtilin. The chain is Subtilin biosynthesis protein SpaB (spaB) from Bacillus subtilis.